We begin with the raw amino-acid sequence, 101 residues long: MAKKAMIEREKKRERLVAKYAAKRAELKEIANDESRPMEERFKARLKLAKLPRNSSATRLHNRCQLTGRPHAYYRKLKVSRIALRELGSNGQIPGMVKSSW.

Belongs to the universal ribosomal protein uS14 family. As to quaternary structure, part of the 30S ribosomal subunit. Contacts proteins S3 and S10.

Binds 16S rRNA, required for the assembly of 30S particles and may also be responsible for determining the conformation of the 16S rRNA at the A site. The protein is Small ribosomal subunit protein uS14 of Ruegeria sp. (strain TM1040) (Silicibacter sp.).